A 644-amino-acid chain; its full sequence is Sentrin-specific protease 1 (644 aa).

The tract at residues Met-1 to Met-200 is interaction with CCAR2. Ser-57, Ser-117, Ser-132, and Ser-157 each carry phosphoserine. The segment at Gln-92–Ser-117 is disordered. A compositionally biased stretch (low complexity) spans Arg-99–Ser-117. 2 disordered regions span residues Pro-156–Glu-184 and Ser-283–Ser-312. The short motif at Pro-171–Arg-177 is the Nuclear localization signal element. The segment at Leu-450 to Cys-613 is protease. Residues His-533 and Asp-550 contribute to the active site. The Nuclear localization signal motif lies at Lys-574–Lys-577. The active-site Nucleophile is the Cys-603. The Nuclear localization signal motif lies at Pro-628 to Met-634. Positions Val-635–Leu-644 match the Nuclear export signal motif.

This sequence belongs to the peptidase C48 family. In terms of assembly, interacts with RBM33; promoting ALKBH5 desumoylation and subsequent activation. As to expression, highly expressed in testis. Expressed at lower levels in thymus, pancreas, spleen, liver, ovary and small intestine.

It localises to the nucleus. It is found in the cytoplasm. In terms of biological role, protease that catalyzes two essential functions in the SUMO pathway. The first is the hydrolysis of an alpha-linked peptide bond at the C-terminal end of the small ubiquitin-like modifier (SUMO) propeptides, SUMO1, SUMO2 and SUMO3 leading to the mature form of the proteins. The second is the deconjugation of SUMO1, SUMO2 and SUMO3 from targeted proteins, by cleaving an epsilon-linked peptide bond between the C-terminal glycine of the mature SUMO and the lysine epsilon-amino group of the target protein. Deconjugates SUMO1 from HIPK2. Deconjugates SUMO1 from HDAC1 and BHLHE40/DEC1, which decreases its transcriptional repression activity. Deconjugates SUMO1 from CLOCK, which decreases its transcriptional activation activity. Deconjugates SUMO2 from MTA1. Inhibits N(6)-methyladenosine (m6A) RNA methylation by mediating SUMO1 deconjugation from METTL3 and ALKBH5: METTL3 inhibits the m6A RNA methyltransferase activity, while ALKBH5 desumoylation promotes m6A demethylation. Desumoylates CCAR2 which decreases its interaction with SIRT1. Deconjugates SUMO1 from GPS2. The protein is Sentrin-specific protease 1 (SENP1) of Homo sapiens (Human).